The following is a 399-amino-acid chain: tRNA-specific 2-thiouridylase MnmA (399 aa).

Residues 7-14 and methionine 33 each bind ATP; that span reads AMSGGVDS. Cysteine 128 acts as the Nucleophile in catalysis. Cysteine 128 and cysteine 224 are joined by a disulfide. Glycine 152 provides a ligand contact to ATP. The interval 174–176 is interaction with tRNA; the sequence is KDQ. Cysteine 224 acts as the Cysteine persulfide intermediate in catalysis. The segment at 333 to 334 is interaction with tRNA; the sequence is RY.

The protein belongs to the MnmA/TRMU family.

The protein resides in the cytoplasm. It catalyses the reaction S-sulfanyl-L-cysteinyl-[protein] + uridine(34) in tRNA + AH2 + ATP = 2-thiouridine(34) in tRNA + L-cysteinyl-[protein] + A + AMP + diphosphate + H(+). Catalyzes the 2-thiolation of uridine at the wobble position (U34) of tRNA, leading to the formation of s(2)U34. This is tRNA-specific 2-thiouridylase MnmA from Rhodopirellula baltica (strain DSM 10527 / NCIMB 13988 / SH1).